Reading from the N-terminus, the 462-residue chain is Gamma-glutamylethanolamide synthetase GlnA4 (462 aa).

The region spanning 30 to 126 is the GS beta-grasp domain; that stretch reads GDIDTVVLAF…AVADLAWEDG (97 aa). In terms of domain architecture, GS catalytic spans 133–462; it reads PRQILRRQLE…WELRRSFERM (330 aa). Glu156 and Glu158 together coordinate Mg(2+). Glu214 contributes to the ATP binding site. Residues Glu219 and Glu226 each coordinate Mg(2+). L-glutamate is bound at residue Gly270. Residue His274 participates in Mg(2+) binding. Residue 276–278 coordinates ATP; that stretch reads HLS. Residues Arg325 and Arg343 each coordinate L-glutamate. Residues Arg343 and Arg348 each coordinate ATP. Glu359 is a binding site for Mg(2+). Residue Arg361 participates in L-glutamate binding.

The protein belongs to the glutamine synthetase family. The cofactor is Mg(2+).

It carries out the reaction ethanolamine + L-glutamate + ATP = gamma-L-glutamylethanolamide + ADP + phosphate + H(+). The protein operates within amine and polyamine degradation; ethanolamine degradation. Very slightly decreased activity with glutamine synthetase (GS) inhibitor methionine sulfoximine (MSO). In terms of biological role, involved in the catabolism of monoamine ethanolamine. Catalyzes the ATP-dependent gamma-glutamylation of ethanolamine. No activity with polyamines. No complementation of the L-glutamine auxotrophy of an E.coli glnA mutant. Enables survival of S.coelicolor under high local environmental ethanolamine conditions. May play a role during starvation conditions to limit intracellular ethanolamine concentration, which in excess is toxic to the cells. The chain is Gamma-glutamylethanolamide synthetase GlnA4 from Streptomyces coelicolor (strain ATCC BAA-471 / A3(2) / M145).